A 267-amino-acid polypeptide reads, in one-letter code: tRNA pseudouridine synthase A (267 aa).

Asp52 acts as the Nucleophile in catalysis. Residue Tyr113 participates in substrate binding.

Belongs to the tRNA pseudouridine synthase TruA family. In terms of assembly, homodimer.

The enzyme catalyses uridine(38/39/40) in tRNA = pseudouridine(38/39/40) in tRNA. Its function is as follows. Formation of pseudouridine at positions 38, 39 and 40 in the anticodon stem and loop of transfer RNAs. The sequence is that of tRNA pseudouridine synthase A from Chlamydia pneumoniae (Chlamydophila pneumoniae).